The primary structure comprises 313 residues: Porphobilinogen deaminase (313 aa).

Residue cysteine 243 is modified to S-(dipyrrolylmethanemethyl)cysteine.

Belongs to the HMBS family. In terms of assembly, monomer. Dipyrromethane is required as a cofactor.

It carries out the reaction 4 porphobilinogen + H2O = hydroxymethylbilane + 4 NH4(+). It participates in porphyrin-containing compound metabolism; protoporphyrin-IX biosynthesis; coproporphyrinogen-III from 5-aminolevulinate: step 2/4. Functionally, tetrapolymerization of the monopyrrole PBG into the hydroxymethylbilane pre-uroporphyrinogen in several discrete steps. The protein is Porphobilinogen deaminase of Bordetella petrii (strain ATCC BAA-461 / DSM 12804 / CCUG 43448).